The chain runs to 504 residues: UDP-N-acetylmuramoylalanine--D-glutamate ligase (504 aa).

129 to 135 (GTNGKTT) provides a ligand contact to ATP.

It belongs to the MurCDEF family.

It is found in the cytoplasm. The catalysed reaction is UDP-N-acetyl-alpha-D-muramoyl-L-alanine + D-glutamate + ATP = UDP-N-acetyl-alpha-D-muramoyl-L-alanyl-D-glutamate + ADP + phosphate + H(+). Its pathway is cell wall biogenesis; peptidoglycan biosynthesis. Cell wall formation. Catalyzes the addition of glutamate to the nucleotide precursor UDP-N-acetylmuramoyl-L-alanine (UMA). The sequence is that of UDP-N-acetylmuramoylalanine--D-glutamate ligase from Burkholderia mallei (strain ATCC 23344).